We begin with the raw amino-acid sequence, 121 residues long: Large ribosomal subunit protein bL20 (121 aa).

The protein belongs to the bacterial ribosomal protein bL20 family.

Its function is as follows. Binds directly to 23S ribosomal RNA and is necessary for the in vitro assembly process of the 50S ribosomal subunit. It is not involved in the protein synthesizing functions of that subunit. The protein is Large ribosomal subunit protein bL20 of Polynucleobacter necessarius subsp. necessarius (strain STIR1).